We begin with the raw amino-acid sequence, 261 residues long: Kallikrein-1E2 (261 aa).

A signal peptide spans 1-17 (MWFLVLCLDLSLGETGA). The propeptide at 18-24 (LPPIQSR) is activation peptide. A Peptidase S1 domain is found at 25 to 258 (IIGGWECEKH…HLKWIKETIE (234 aa)). 5 disulfide bridges follow: cysteine 31–cysteine 173, cysteine 50–cysteine 66, cysteine 152–cysteine 219, cysteine 184–cysteine 198, and cysteine 209–cysteine 234. Histidine 65 serves as the catalytic Charge relay system. Residue asparagine 79 is glycosylated (N-linked (GlcNAc...) asparagine). The active-site Charge relay system is the aspartate 120. Serine 213 acts as the Charge relay system in catalysis.

Belongs to the peptidase S1 family. Kallikrein subfamily. In terms of tissue distribution, detected in prostate and semen.

It is found in the secreted. It carries out the reaction Preferential cleavage of Arg-|-Xaa bonds in small molecule substrates. Highly selective action to release kallidin (lysyl-bradykinin) from kininogen involves hydrolysis of Met-|-Xaa or Leu-|-Xaa.. Glandular kallikreins cleave Met-Lys and Arg-Ser bonds in kininogen to release Lys-bradykinin. The sequence is that of Kallikrein-1E2 (KLK1E2) from Equus caballus (Horse).